The sequence spans 789 residues: Phenylalanine--tRNA ligase beta subunit (789 aa).

A tRNA-binding domain is found at 39 to 149 (ADGLEAFRIA…HEAPVGQSYV (111 aa)). The B5 domain maps to 399 to 471 (SAVPVISYDP…RIEGLDNVPS (73 aa)). 3 residues coordinate Mg(2+): aspartate 449, aspartate 455, and aspartate 459. Residues 696 to 788 (SMLQPVFRDF…AAAKKGARLR (93 aa)) form the FDX-ACB domain.

This sequence belongs to the phenylalanyl-tRNA synthetase beta subunit family. Type 1 subfamily. Tetramer of two alpha and two beta subunits. It depends on Mg(2+) as a cofactor.

The protein localises to the cytoplasm. It carries out the reaction tRNA(Phe) + L-phenylalanine + ATP = L-phenylalanyl-tRNA(Phe) + AMP + diphosphate + H(+). The protein is Phenylalanine--tRNA ligase beta subunit of Zymomonas mobilis subsp. mobilis (strain ATCC 31821 / ZM4 / CP4).